Consider the following 137-residue polypeptide: Putative pre-16S rRNA nuclease (137 aa).

The protein belongs to the YqgF nuclease family.

It is found in the cytoplasm. Its function is as follows. Could be a nuclease involved in processing of the 5'-end of pre-16S rRNA. The protein is Putative pre-16S rRNA nuclease of Mycoplasmopsis synoviae (strain 53) (Mycoplasma synoviae).